Here is a 79-residue protein sequence, read N- to C-terminus: EAMZP30-47 protein (79 aa).

Residues 1–12 (HAASPRGRPQQR) are compositionally biased toward low complexity. The tract at residues 1–47 (HAASPRGRPQQRSSRHGAEGPDTTRRGSCCSSSSSCCRPSTPRHPHN) is disordered. Basic and acidic residues predominate over residues 16–25 (HGAEGPDTTR). Residues 28–37 (SCCSSSSSCC) are compositionally biased toward low complexity.

The protein resides in the membrane. The protein localises to the cell membrane. It is found in the cytoplasmic vesicle. Its subcellular location is the secretory vesicle. It localises to the rhoptry. The protein is EAMZP30-47 protein (CMC17) of Eimeria acervulina (Coccidian parasite).